The following is a 177-amino-acid chain: Peptide methionine sulfoxide reductase MsrA 2 (177 aa).

Cys12 is an active-site residue.

Belongs to the MsrA Met sulfoxide reductase family.

It carries out the reaction L-methionyl-[protein] + [thioredoxin]-disulfide + H2O = L-methionyl-(S)-S-oxide-[protein] + [thioredoxin]-dithiol. The catalysed reaction is [thioredoxin]-disulfide + L-methionine + H2O = L-methionine (S)-S-oxide + [thioredoxin]-dithiol. Functionally, has an important function as a repair enzyme for proteins that have been inactivated by oxidation. Catalyzes the reversible oxidation-reduction of methionine sulfoxide in proteins to methionine. The sequence is that of Peptide methionine sulfoxide reductase MsrA 2 (msrA2) from Staphylococcus aureus (strain Mu50 / ATCC 700699).